The sequence spans 1055 residues: Focal adhesion kinase 1 (1055 aa).

The disordered stretch occupies residues 1 to 29; sequence MAAAYLDPNLNHTPSSSTKTHLGTGTERS. The residue at position 2 (A2) is an N-acetylalanine. At Y5 the chain carries Phosphotyrosine. Positions 10-27 are enriched in polar residues; the sequence is LNHTPSSSTKTHLGTGTE. A Phosphothreonine modification is found at T13. Residues S29 and S54 each carry the phosphoserine modification. Positions 35-355 constitute an FERM domain; it reads RVLKVFHYFE…GYCRLVNGAT (321 aa). Residue K152 forms a Glycyl lysine isopeptide (Lys-Gly) (interchain with G-Cter in SUMO) linkage. Y397 is modified (phosphotyrosine; by autocatalysis). The residue at position 407 (Y407) is a Phosphotyrosine. The Protein kinase domain occupies 422-680; that stretch reads IELGRCIGEG…ELKAQLSTIL (259 aa). Residues 428–434, K454, and 500–502 each bind ATP; these read IGEGQFG and ELC. Catalysis depends on D546, which acts as the Proton acceptor. Phosphotyrosine is present on residues Y570 and Y576. The residue at position 577 (Y577) is a Phosphotyrosine; by RET and SRC. S580 carries the phosphoserine modification. The span at 685–697 shows a compositional bias: basic and acidic residues; it reads VQQEERMRMESRR. 2 disordered regions span residues 685–734 and 837–923; these read VQQE…PSPQ and VRLS…LDRS. An interaction with TGFB1I1 region spans residues 707 to 1055; sequence GSDEAPPKPS…LKMLGQTRPH (349 aa). Residue S722 is modified to Phosphoserine. S732 is subject to Phosphoserine; by CDK5. Over residues 837-849 the composition is skewed to basic and acidic residues; that stretch reads VRLSRGSIDREDG. A Phosphoserine modification is found at S843. The residue at position 861 (Y861) is a Phosphotyrosine. A compositionally biased stretch (pro residues) spans 869 to 880; sequence PAAPPKKPPRPG. The segment covering 886-896 has biased composition (polar residues); the sequence is SNLSSISSPAE. S913 bears the Phosphoserine mark. The interval 915–1055 is interaction with ARHGEF28; it reads PPTANLDRSN…LKMLGQTRPH (141 aa). Residue T917 is modified to Phosphothreonine. Y928 is subject to Phosphotyrosine.

The protein belongs to the protein kinase superfamily. Tyr protein kinase family. FAK subfamily. Interacts with GIT1. Component of a complex that contains at least FER, CTTN and PTK2/FAK1. Interacts with BMX. Interacts with STEAP4. Interacts with ZFYVE21. Interacts with ESR1. Interacts with PIK3R1 or PIK3R2. Interacts with FGR, FLT4 and RET. Interacts with EPHA2 in resting cells; activation of EPHA2 recruits PTPN11, leading to dephosphorylation of PTK2/FAK1 and dissociation of the complex. Interacts with EPHA1 (kinase activity-dependent). Interacts with P53/TP53. Interacts (via first Pro-rich region) with CAS family members (via SH3 domain), including BCAR1, BCAR3, and CASS4. Interacts with NEDD9 (via SH3 domain). Interacts with TGFB1I1. Interacts with SRC, GRB2 and GRB7. Interacts with ARHGEF28. Interacts with SHB. Part of a complex composed of THSD1, PTK2/FAK1, TLN1 and VCL. Interacts with PXN and TLN1. Interacts with SORBS1. Interacts with STAT1. Interacts with WASL. Interacts with ARHGAP26 and SHC1. Interacts with RB1CC1; this inhibits PTK2/FAK1 activity and activation of downstream signaling pathways. Interacts with ARHGEF7. Interacts with MDM2. Interacts with PIAS1. Interacts with DCC. Interacts with LPXN (via LD motif 3). Interacts with MISP. Interacts with EMP2; regulates PTK2 activation and localization. Interacts with DSCAM. Interacts with AMBRA1. Interacts (when tyrosine-phosphorylated) with tensin TNS1; the interaction is increased by phosphorylation of TNS1. In terms of processing, phosphorylated on tyrosine residues upon activation, e.g. upon integrin signaling. Tyr-397 is the major autophosphorylation site, but other kinases can also phosphorylate this residue. Phosphorylation at Tyr-397 promotes interaction with SRC and SRC family members, leading to phosphorylation at Tyr-576, Tyr-577 and at additional tyrosine residues. FGR promotes phosphorylation at Tyr-397 and Tyr-576. FER promotes phosphorylation at Tyr-577, Tyr-861 and Tyr-928, even when cells are not adherent. Tyr-397, Tyr-576 and Ser-722 are phosphorylated only when cells are adherent. Phosphorylation at Tyr-397 is important for interaction with BMX, PIK3R1 and SHC1. Phosphorylation at Tyr-928 is important for interaction with GRB2. Dephosphorylated by PTPN11; PTPN11 is recruited to PTK2 via EPHA2 (tyrosine phosphorylated). Microtubule-induced dephosphorylation at Tyr-397 is crucial for the induction of focal adhesion disassembly; this dephosphorylation could be catalyzed by PTPN11 and regulated by ZFYVE21. Phosphorylation on tyrosine residues is enhanced by NTN1. Post-translationally, sumoylated; this enhances autophosphorylation.

The protein localises to the cell junction. It localises to the focal adhesion. Its subcellular location is the cell membrane. It is found in the cytoplasm. The protein resides in the perinuclear region. The protein localises to the cell cortex. It localises to the cytoskeleton. Its subcellular location is the microtubule organizing center. It is found in the centrosome. The protein resides in the nucleus. The protein localises to the cilium basal body. The catalysed reaction is L-tyrosyl-[protein] + ATP = O-phospho-L-tyrosyl-[protein] + ADP + H(+). Subject to autoinhibition, mediated by interactions between the FERM domain and the kinase domain. Activated by autophosphorylation at Tyr-397. This promotes interaction with SRC and phosphorylation at Tyr-576 and Tyr-577 in the kinase activation loop by SRC. Phosphorylation at Tyr-397, Tyr-576 and Tyr-577 is required for maximal kinase activity. Non-receptor protein-tyrosine kinase that plays an essential role in regulating cell migration, adhesion, spreading, reorganization of the actin cytoskeleton, formation and disassembly of focal adhesions and cell protrusions, cell cycle progression, cell proliferation and apoptosis. Required for early embryonic development and placenta development. Required for embryonic angiogenesis, normal cardiomyocyte migration and proliferation, and normal heart development. Regulates axon growth and neuronal cell migration, axon branching and synapse formation; required for normal development of the nervous system. Plays a role in osteogenesis and differentiation of osteoblasts. Functions in integrin signal transduction, but also in signaling downstream of numerous growth factor receptors, G-protein coupled receptors (GPCR), EPHA2, netrin receptors and LDL receptors. Forms multisubunit signaling complexes with SRC and SRC family members upon activation; this leads to the phosphorylation of additional tyrosine residues, creating binding sites for scaffold proteins, effectors and substrates. Regulates numerous signaling pathways. Promotes activation of phosphatidylinositol 3-kinase and the AKT1 signaling cascade. Promotes activation of MAPK1/ERK2, MAPK3/ERK1 and the MAP kinase signaling cascade. Promotes localized and transient activation of guanine nucleotide exchange factors (GEFs) and GTPase-activating proteins (GAPs), and thereby modulates the activity of Rho family GTPases. Signaling via CAS family members mediates activation of RAC1. Phosphorylates NEDD9 following integrin stimulation. Recruits the ubiquitin ligase MDM2 to P53/TP53 in the nucleus, and thereby regulates P53/TP53 activity, P53/TP53 ubiquitination and proteasomal degradation. Phosphorylates SRC; this increases SRC kinase activity. Phosphorylates ACTN1, ARHGEF7, GRB7, RET and WASL. Promotes phosphorylation of PXN and STAT1; most likely PXN and STAT1 are phosphorylated by a SRC family kinase that is recruited to autophosphorylated PTK2/FAK1, rather than by PTK2/FAK1 itself. Promotes phosphorylation of BCAR1; GIT2 and SHC1; this requires both SRC and PTK2/FAK1. Promotes phosphorylation of BMX and PIK3R1. Functionally, does not contain a kinase domain and inhibits PTK2/FAK1 phosphorylation and signaling. Its enhanced expression can attenuate the nuclear accumulation of LPXN and limit its ability to enhance serum response factor (SRF)-dependent gene transcription. The sequence is that of Focal adhesion kinase 1 from Rattus norvegicus (Rat).